We begin with the raw amino-acid sequence, 1050 residues long: Isoleucine--tRNA ligase (1050 aa).

The short motif at 45–56 (PYPSSPIPHIGT) is the 'HIGH' region element. Residues 594-598 (EMHKS) carry the 'KMSKS' region motif. Residue Lys597 participates in ATP binding.

The protein belongs to the class-I aminoacyl-tRNA synthetase family. IleS type 2 subfamily. Monomer. It depends on Zn(2+) as a cofactor.

It is found in the cytoplasm. The catalysed reaction is tRNA(Ile) + L-isoleucine + ATP = L-isoleucyl-tRNA(Ile) + AMP + diphosphate. In terms of biological role, catalyzes the attachment of isoleucine to tRNA(Ile). As IleRS can inadvertently accommodate and process structurally similar amino acids such as valine, to avoid such errors it has two additional distinct tRNA(Ile)-dependent editing activities. One activity is designated as 'pretransfer' editing and involves the hydrolysis of activated Val-AMP. The other activity is designated 'posttransfer' editing and involves deacylation of mischarged Val-tRNA(Ile). The chain is Isoleucine--tRNA ligase from Sulfolobus acidocaldarius (strain ATCC 33909 / DSM 639 / JCM 8929 / NBRC 15157 / NCIMB 11770).